The chain runs to 311 residues: Probable 5-dehydro-4-deoxyglucarate dehydratase (311 aa).

It belongs to the DapA family.

The catalysed reaction is 5-dehydro-4-deoxy-D-glucarate + H(+) = 2,5-dioxopentanoate + CO2 + H2O. It functions in the pathway carbohydrate acid metabolism; D-glucarate degradation; 2,5-dioxopentanoate from D-glucarate: step 2/2. This Ralstonia nicotianae (strain ATCC BAA-1114 / GMI1000) (Ralstonia solanacearum) protein is Probable 5-dehydro-4-deoxyglucarate dehydratase.